Reading from the N-terminus, the 81-residue chain is MANLILKQSLIILLIIYSTPILSSQARILRTYRPTTMGDMDSQVLLRELGIDLSKFKGQDERRFLVDSERVSPGGPDPQHH.

An N-terminal signal peptide occupies residues 1–26 (MANLILKQSLIILLIIYSTPILSSQA). Hydroxyproline is present on residues Pro73 and Pro76. O-linked (Ara...) hydroxyproline glycosylation occurs at Pro76.

The protein belongs to the CLV3/ESR signal peptide family. Post-translationally, the O-glycosylation (arabinosylation) of the hydroxyproline Pro-76 enhances binding affinity of the CLE6p peptide for its receptor. As to expression, mostly expressed in roots, seedlings, stems and flowers, and, to a lower extent, in apex and siliques.

It localises to the secreted. The protein resides in the extracellular space. Functionally, extracellular signal peptide that regulates cell fate. This chain is CLAVATA3/ESR (CLE)-related protein 6, found in Arabidopsis thaliana (Mouse-ear cress).